Reading from the N-terminus, the 499-residue chain is MRYSFCMLEKTNIPLIRALNLTLVSLCFAMLPNPVHADSLPERIDLFVSLFDYNSATTSYDIRSIQTDFPTRLLTPDSMLPQTSEYPLKDIQLLYKLAQSCTGKLPLSPLITEPLVFTRSLCKGSSLSPRWFARSGLIHPGGGTYAFRYAEKYPAQFANLLPYMHIQERPNAAEGTLLYHLQNMGEDAINALVSGASMFGSGSDLWLRKGDIYYLFNEETWLTNANKAGLSYSLLSADNTCFIQRGNICWDVEDHSDLLRTSMIILVIANIFLVLGWSGYRWNSKRQEMRSRMLILQILTHELRTPIASLSLTVEGFRREFEHLPESLYDEFRRLCEDSRRLRQLAEASKDYLQSDSKPLASDWVPSVEEWLQYKVEEEFSGNVTLKLNQDIAAKLNVYWLGTCVDNLLRNAVKYGVAPVTLEVITQTNLVTFKVTDQGSLTHRDWRHLRKPFVSKSGLGLGLTIVESMVGRMGGKMSLEGPPTTFILEIPCETDTASR.

Over 1–12 the chain is Cytoplasmic; sequence MRYSFCMLEKTN. The chain crosses the membrane as a helical span at residues 13–31; the sequence is IPLIRALNLTLVSLCFAML. Residues 32 to 257 are Periplasmic-facing; the sequence is PNPVHADSLP…ICWDVEDHSD (226 aa). 2 cysteine pairs are disulfide-bonded: cysteine 101/cysteine 122 and cysteine 241/cysteine 249. The chain crosses the membrane as a helical span at residues 258–280; sequence LLRTSMIILVIANIFLVLGWSGY. At 281–499 the chain is on the cytoplasmic side; sequence RWNSKRQEMR…IPCETDTASR (219 aa). The 197-residue stretch at 298–494 folds into the Histidine kinase domain; that stretch reads ILTHELRTPI…TFILEIPCET (197 aa). Histidine 301 is modified (phosphohistidine; by autocatalysis).

In terms of assembly, homodimer. In terms of processing, autophosphorylated. Contains two disulfide bonds that may play a role in the stability of the protein. However, the disulfide bonds are not absolutely essential, as some activity and growth are detected in the absence of each disulfide bond.

It is found in the cell inner membrane. It catalyses the reaction ATP + protein L-histidine = ADP + protein N-phospho-L-histidine.. Its function is as follows. Member of the two-component regulatory system VxrB/VxrA involved in the regulation of diverses processes, including virulence, the type VI secretion system (T6SS) and biofilm formation. Functions as a sensor protein kinase which is autophosphorylated at a histidine residue and transfers its phosphate group to the conserved aspartic acid residue in the regulatory domain of VxrB. Is critical for colonization in the infant mouse model. Contributes to the resistance to beta-lactam treatment. This Vibrio cholerae serotype O1 (strain ATCC 39315 / El Tor Inaba N16961) protein is Sensor histidine kinase VxrA.